The primary structure comprises 357 residues: Carbamoyl phosphate synthase small chain (357 aa).

A CPSase region spans residues Met-1–Asn-168. L-glutamine is bound by residues Ser-46, Gly-220, and Gly-222. The region spanning Lys-172–Lys-357 is the Glutamine amidotransferase type-1 domain. The active-site Nucleophile is Cys-247. Leu-248, Gln-251, Asn-289, Gly-291, and Tyr-292 together coordinate L-glutamine. Residues His-331 and Asp-333 contribute to the active site.

It belongs to the CarA family. In terms of assembly, composed of two chains; the small (or glutamine) chain promotes the hydrolysis of glutamine to ammonia, which is used by the large (or ammonia) chain to synthesize carbamoyl phosphate. Tetramer of heterodimers (alpha,beta)4.

The catalysed reaction is hydrogencarbonate + L-glutamine + 2 ATP + H2O = carbamoyl phosphate + L-glutamate + 2 ADP + phosphate + 2 H(+). The enzyme catalyses L-glutamine + H2O = L-glutamate + NH4(+). Its pathway is amino-acid biosynthesis; L-arginine biosynthesis; carbamoyl phosphate from bicarbonate: step 1/1. It functions in the pathway pyrimidine metabolism; UMP biosynthesis via de novo pathway; (S)-dihydroorotate from bicarbonate: step 1/3. In terms of biological role, small subunit of the glutamine-dependent carbamoyl phosphate synthetase (CPSase). CPSase catalyzes the formation of carbamoyl phosphate from the ammonia moiety of glutamine, carbonate, and phosphate donated by ATP, constituting the first step of 2 biosynthetic pathways, one leading to arginine and/or urea and the other to pyrimidine nucleotides. The small subunit (glutamine amidotransferase) binds and cleaves glutamine to supply the large subunit with the substrate ammonia. This is Carbamoyl phosphate synthase small chain from Lactococcus lactis subsp. lactis (strain IL1403) (Streptococcus lactis).